The following is a 736-amino-acid chain: Prolyl oligopeptidase dbiP (736 aa).

Residues S572, D656, and H692 each act as charge relay system in the active site.

Belongs to the peptidase S9A family. Monomer.

It carries out the reaction Hydrolysis of Pro-|-Xaa &gt;&gt; Ala-|-Xaa in oligopeptides.. It functions in the pathway mycotoxin biosynthesis. In terms of biological role, prolyl oligopeptidase; part of the gene cluster that mediates the biosynthesis of dendrothelin A, a highly methylated cyclic dodecapeptide showing slight nematodicidal activity. Excises and catalyzes the macrocyclization of the methylated core peptide of dbiMA to yield dendrothelin A. DbiP works in a two-step fashion with an initial cleavage at the N-terminus, followed by a second cleavage at the C-terminus of the core peptide. According to this mechanism, the free N-terminus of the core peptide, generated by the first cleavage, attacks the covalent intermediate of the second cleavage, which results in macrocyclization of the core peptide. This is Prolyl oligopeptidase dbiP from Dendrothele bispora (strain CBS 962.96).